The following is a 393-amino-acid chain: uncharacterized protein (393 aa).

This is an uncharacterized protein from Methanocaldococcus jannaschii (strain ATCC 43067 / DSM 2661 / JAL-1 / JCM 10045 / NBRC 100440) (Methanococcus jannaschii).